The chain runs to 786 residues: Constitutive coactivator of peroxisome proliferator-activated receptor gamma (786 aa).

Residues Met1–Leu561 form a mediates transactivation of PPARG region. Disordered regions lie at residues Pro371–Ser413 and His738–Tyr786. The span at Gln750–Gln771 shows a compositional bias: polar residues.

Belongs to the constitutive coactivator of PPAR-gamma family. As to quaternary structure, interacts with ESR1 and RXRA. Interacts with PPARG; in a ligand-independent manner. Ubiquitously expressed (at protein level).

The protein localises to the nucleus. Its function is as follows. Functions as a transactivator of PPARG and ESR1. Functions in adipogenesis through PPARG activation. This chain is Constitutive coactivator of peroxisome proliferator-activated receptor gamma (Fam120b), found in Mus musculus (Mouse).